A 682-amino-acid polypeptide reads, in one-letter code: Potassium-transporting ATPase ATP-binding subunit (682 aa).

4 helical membrane-spanning segments follow: residues 34-54 (PVMF…IAMA), 62-82 (ALFS…ANFA), 219-239 (IALT…TATL), and 254-274 (VLVA…LSAI). The 4-aspartylphosphate intermediate role is filled by aspartate 307. ATP contacts are provided by residues aspartate 344, glutamate 348, 377–384 (FTAQSRMS), and lysine 395. Mg(2+)-binding residues include aspartate 518 and aspartate 522. The next 3 helical transmembrane spans lie at 588-608 (FAII…LNIM), 616-636 (AILS…PLAL), and 656-676 (IYGL…DLLL).

The protein belongs to the cation transport ATPase (P-type) (TC 3.A.3) family. Type IA subfamily. In terms of assembly, the system is composed of three essential subunits: KdpA, KdpB and KdpC.

The protein resides in the cell inner membrane. The enzyme catalyses K(+)(out) + ATP + H2O = K(+)(in) + ADP + phosphate + H(+). Its function is as follows. Part of the high-affinity ATP-driven potassium transport (or Kdp) system, which catalyzes the hydrolysis of ATP coupled with the electrogenic transport of potassium into the cytoplasm. This subunit is responsible for energy coupling to the transport system and for the release of the potassium ions to the cytoplasm. This chain is Potassium-transporting ATPase ATP-binding subunit, found in Escherichia coli O139:H28 (strain E24377A / ETEC).